We begin with the raw amino-acid sequence, 146 residues long: Hemoglobin subunit beta (146 aa).

Residues 2-146 enclose the Globin domain; that stretch reads HWTAEEKQLI…VAHALARKYH (145 aa). H63 and H92 together coordinate heme b.

This sequence belongs to the globin family. In terms of assembly, heterotetramer of two alpha chains and two beta chains. Red blood cells.

Involved in oxygen transport from the lung to the various peripheral tissues. This Branta canadensis (Canada goose) protein is Hemoglobin subunit beta (HBB).